Here is a 199-residue protein sequence, read N- to C-terminus: Adenylyl-sulfate kinase (199 aa).

Residue 35 to 42 (GLSGSGKS) participates in ATP binding. The active-site Phosphoserine intermediate is Ser109.

Belongs to the APS kinase family.

The catalysed reaction is adenosine 5'-phosphosulfate + ATP = 3'-phosphoadenylyl sulfate + ADP + H(+). Its pathway is sulfur metabolism; hydrogen sulfide biosynthesis; sulfite from sulfate: step 2/3. Functionally, catalyzes the synthesis of activated sulfate. In Clostridium kluyveri (strain ATCC 8527 / DSM 555 / NBRC 12016 / NCIMB 10680 / K1), this protein is Adenylyl-sulfate kinase.